The chain runs to 410 residues: Neuroserpin (410 aa).

Residues 1–16 (MAFLGLFSLLVLQSMA) form the signal peptide. 3 N-linked (GlcNAc...) asparagine glycosylation sites follow: Asn-157, Asn-321, and Asn-401. An O-linked (Xyl...) (chondroitin sulfate) serine glycan is attached at Ser-403.

It belongs to the serpin family. Monomer. Has a tendency to form large polymers already at 41 and 45 degrees Celsius (in vitro). As to expression, detected in brain cortex and hippocampus pyramidal neurons (at protein level). Detected in cerebrospinal fluid (at protein level). Predominantly expressed in the brain.

It is found in the secreted. The protein resides in the cytoplasmic vesicle. The protein localises to the secretory vesicle lumen. It localises to the perikaryon. Serine protease inhibitor that inhibits plasminogen activators and plasmin but not thrombin. May be involved in the formation or reorganization of synaptic connections as well as for synaptic plasticity in the adult nervous system. May protect neurons from cell damage by tissue-type plasminogen activator. The sequence is that of Neuroserpin (SERPINI1) from Homo sapiens (Human).